The chain runs to 1613 residues: Myosin-IIIa (1613 aa).

The 267-residue stretch at 21–287 (WEIIETIGKG…VSDLLKHKFI (267 aa)) folds into the Protein kinase domain. Residues 27 to 35 (IGKGTYGKV) and Lys-50 each bind ATP. Catalysis depends on Asp-150, which acts as the Proton acceptor. The Myosin motor domain maps to 338–1052 (KDVDDLATLD…HVEQLNLMRK (715 aa)). The actin-binding stretch occupies residues 933–955 (LMDLLSKMVVGQPHFVRCIKPNN). IQ domains are found at residues 1054 to 1083 (ATNK…KRKS) and 1081 to 1110 (RKSS…MKNT). Disordered regions lie at residues 1136–1168 (VKKQ…TAPF) and 1476–1506 (SGVS…EDST). Residues 1145-1161 (PTNESNTSTPNNKESPS) show a composition bias toward low complexity. The tract at residues 1398–1476 (EGVHHSKMVD…RHVSTHQYLS (79 aa)) is interaction with MORN4. Basic residues predominate over residues 1488–1497 (RPPRRPRKPK).

The protein in the C-terminal section; belongs to the TRAFAC class myosin-kinesin ATPase superfamily. Myosin family. It in the N-terminal section; belongs to the protein kinase superfamily. STE Ser/Thr protein kinase family. As to quaternary structure, interacts with MORN4. Interacts (via C-terminus) with ESPN and ESPNL. In terms of tissue distribution, expressed in the cochlear hair cells (at protein level). Expressed in utricle hair bundles (at protein level).

The protein localises to the cytoplasm. It localises to the cytoskeleton. Its subcellular location is the cell projection. The protein resides in the filopodium tip. It is found in the stereocilium. It carries out the reaction L-seryl-[protein] + ATP = O-phospho-L-seryl-[protein] + ADP + H(+). The enzyme catalyses L-threonyl-[protein] + ATP = O-phospho-L-threonyl-[protein] + ADP + H(+). It catalyses the reaction ATP + H2O = ADP + phosphate + H(+). Functionally, actin-dependent motor protein with a protein kinase activity, playing an essential role in hearing. Probably plays also a role in vision. Required for normal cochlear hair bundle development and hearing. Plays an important role in the early steps of cochlear hair bundle morphogenesis. Influences the number and lengths of stereocilia to be produced and limits the growth of microvilli within the forming auditory hair bundles thereby contributing to the architecture of the hair bundle, including its staircase pattern. Involved in the elongation of actin in stereocilia tips by transporting the actin regulatory factor ESPN to the plus ends of actin filaments. The sequence is that of Myosin-IIIa (Myo3a) from Mus musculus (Mouse).